The chain runs to 124 residues: Keratin-associated protein 12-2 (124 aa).

Tandem repeats lie at residues 10–13 (CQAA), 14–18 (CVPSS), 19–23 (CQPSC), 24–28 (STSSP), 33–38 (CFTSSL), 39–43 (CQPTC), 44–48 (STSST), 49–52 (CQAT), 53–57 (CVPVS), 58–62 (YRPAV), 63–67 (CLPVT), 68–72 (YKPTL), 73–77 (CVTPS), 78–82 (CQSSV), 83–87 (FLPVS), 88–92 (YRPAV), 98–102 (CQSSG), 103–107 (CYQPS), 108–112 (CPTLV), and 113–117 (YRPIS). The 20 X 5 AA approximate repeats stretch occupies residues 10–117 (CQAACVPSSC…CPTLVYRPIS (108 aa)).

The protein belongs to the KRTAP type 12 family. In terms of assembly, interacts with hair keratins.

Functionally, in the hair cortex, hair keratin intermediate filaments are embedded in an interfilamentous matrix, consisting of hair keratin-associated proteins (KRTAP), which are essential for the formation of a rigid and resistant hair shaft through their extensive disulfide bond cross-linking with abundant cysteine residues of hair keratins. The matrix proteins include the high-sulfur and high-glycine-tyrosine keratins. The polypeptide is Keratin-associated protein 12-2 (Bos taurus (Bovine)).